The following is a 247-amino-acid chain: Protein At-4/1 (247 aa).

Coiled coils occupy residues Val-39–Arg-126 and Leu-182–Ser-247.

Interacts with viral tomato spotted wilt virus (TSWV) movement protein NSM, which is involved in cell-to cell spread of viral genome and enlargement of the host plasmodesmata size exclusion limit (SEL). In terms of tissue distribution, expressed in leaves (at protein level).

The protein localises to the endoplasmic reticulum. The protein resides in the cell junction. Its subcellular location is the plasmodesma. Involved in intra- and inter-cellular trafficking through plasmodesmata (PD). This Arabidopsis thaliana (Mouse-ear cress) protein is Protein At-4/1.